The primary structure comprises 505 residues: RNA-splicing ligase RtcB homolog (505 aa).

Positions 119, 122, 227, and 259 each coordinate Mn(2+). 226 to 230 (NHYAE) provides a ligand contact to GMP. Position 300 is a phosphoserine (S300). H353 contacts Mn(2+). GMP-binding positions include 353–354 (HN), 402–405 (GGTM), S409, and 428–431 (HGAG). Residue H428 is the GMP-histidine intermediate of the active site. A Glycyl lysine isopeptide (Lys-Gly) (interchain with G-Cter in SUMO2) cross-link involves residue K496. A GMP-binding site is contributed by K504.

The protein belongs to the RtcB family. In terms of assembly, catalytic component of the tRNA-splicing ligase complex. Requires Mn(2+) as cofactor.

It is found in the nucleus. It localises to the cytoplasm. The enzyme catalyses a 3'-end 3'-phospho-ribonucleotide-RNA + a 5'-end dephospho-ribonucleoside-RNA + GTP = a ribonucleotidyl-ribonucleotide-RNA + GMP + diphosphate. It catalyses the reaction a 3'-end 2',3'-cyclophospho-ribonucleotide-RNA + a 5'-end dephospho-ribonucleoside-RNA + GTP + H2O = a ribonucleotidyl-ribonucleotide-RNA + GMP + diphosphate + H(+). Protein archease stimulates the activity of the tRNA ligase complex with high efficiency in the presence of GTP. Its function is as follows. Catalytic subunit of the tRNA-splicing ligase complex that acts by directly joining spliced tRNA halves to mature-sized tRNAs by incorporating the precursor-derived splice junction phosphate into the mature tRNA as a canonical 3',5'-phosphodiester. May act as an RNA ligase with broad substrate specificity, and may function toward other RNAs. The polypeptide is RNA-splicing ligase RtcB homolog (Homo sapiens (Human)).